Consider the following 63-residue polypeptide: MKANELKEKSVEELNAELLRLLREQFDLRMKLNTDQLAQAHLVKQVRRDIARVKTVLNQKAGA.

This sequence belongs to the universal ribosomal protein uL29 family.

This is Large ribosomal subunit protein uL29 from Psychromonas ingrahamii (strain DSM 17664 / CCUG 51855 / 37).